The sequence spans 389 residues: Teichoic acid ribitol-phosphate primase (389 aa).

Belongs to the CDP-glycerol glycerophosphotransferase family.

It localises to the cell membrane. The catalysed reaction is 4-O-[(2R)-glycerylphospho]-N-acetyl-beta-D-mannosaminyl-(1-&gt;4)-N-acetyl-alpha-D-glucosaminyl di-trans,octa-cis-undecaprenyl diphosphate + CDP-L-ribitol = 4-O-[1-D-ribitylphospho-(2R)-1-glycerylphospho]-N-acetyl-beta-D-mannosaminyl-(1-&gt;4)-N-acetyl-alpha-D-glucosaminyl di-trans,octa-cis-undecaprenyl diphosphate + CMP + H(+). It participates in cell wall biogenesis; poly(ribitol phosphate) teichoic acid biosynthesis. In terms of biological role, catalyzes the addition of a single ribitol phosphate unit onto the glycerol phosphate of the linkage unit, as a primer for polymerisation by TarL. The polypeptide is Teichoic acid ribitol-phosphate primase (tarK) (Bacillus spizizenii (strain ATCC 23059 / NRRL B-14472 / W23) (Bacillus subtilis subsp. spizizenii)).